The primary structure comprises 71 residues: Phosphatidylinositol N-acetylglucosaminyltransferase subunit Y (71 aa).

At 1–3 (MFL) the chain is on the cytoplasmic side. A helical membrane pass occupies residues 4–26 (SLPMLTVLIPLVSLAGLFYSASV). Residues 27–44 (EDDFPQGCTSTTSLCFYS) are Lumenal-facing. A helical transmembrane segment spans residues 45–65 (LLLPITIPVYVFFHLWTWMGI). Over 66 to 71 (KLFRHN) the chain is Cytoplasmic.

In terms of assembly, component of the glycosylphosphatidylinositol-N-acetylglucosaminyltransferase (GPI-GnT) complex composed at least by PIGA, PIGC, PIGH, PIGP, PIGQ, PIGY and DPM2. Interacts directly with PIGA; this interaction regulates glycosylphosphatidylinositol-N-acetylglucosaminyltransferase activity. Does not interact with Ras proteins.

It localises to the endoplasmic reticulum membrane. It functions in the pathway glycolipid biosynthesis; glycosylphosphatidylinositol-anchor biosynthesis. Its function is as follows. Part of the glycosylphosphatidylinositol-N-acetylglucosaminyltransferase (GPI-GnT) complex that catalyzes the transfer of N-acetylglucosamine from UDP-N-acetylglucosamine to phosphatidylinositol and participates in the first step of GPI biosynthesis. May act by regulating the catalytic subunit PIGA. This chain is Phosphatidylinositol N-acetylglucosaminyltransferase subunit Y, found in Bos taurus (Bovine).